Reading from the N-terminus, the 333-residue chain is Ornithine carbamoyltransferase (333 aa).

Carbamoyl phosphate is bound by residues 56 to 59 (STRT), glutamine 83, arginine 107, and 134 to 137 (HPTQ). Residues asparagine 167, aspartate 231, and 235 to 236 (SM) each bind L-ornithine. Carbamoyl phosphate is bound by residues 273 to 274 (CL) and arginine 318.

It belongs to the aspartate/ornithine carbamoyltransferase superfamily. OTCase family.

Its subcellular location is the cytoplasm. The catalysed reaction is carbamoyl phosphate + L-ornithine = L-citrulline + phosphate + H(+). Its pathway is amino-acid biosynthesis; L-arginine biosynthesis; L-arginine from L-ornithine and carbamoyl phosphate: step 1/3. Its function is as follows. Has vitronectin and fibronectin-binding activity. Functionally, reversibly catalyzes the transfer of the carbamoyl group from carbamoyl phosphate (CP) to the N(epsilon) atom of ornithine (ORN) to produce L-citrulline. The protein is Ornithine carbamoyltransferase (argF) of Staphylococcus epidermidis (strain ATCC 12228 / FDA PCI 1200).